We begin with the raw amino-acid sequence, 345 residues long: Isopentenyl-diphosphate delta-isomerase (345 aa).

6–7 is a binding site for substrate; it reads RK. FMN-binding positions include 63–65, Ser-93, and Asn-122; that span reads SMT. 93–95 lines the substrate pocket; that stretch reads SQR. Substrate is bound at residue Gln-156. Residue Glu-157 participates in Mg(2+) binding. Residues Lys-188, Thr-218, 265–267, and 286–287 contribute to the FMN site; these read GLR and AL.

The protein belongs to the IPP isomerase type 2 family. In terms of assembly, homooctamer. Dimer of tetramers. Requires FMN as cofactor. The cofactor is NADPH. It depends on Mg(2+) as a cofactor.

It is found in the cytoplasm. The enzyme catalyses isopentenyl diphosphate = dimethylallyl diphosphate. In terms of biological role, involved in the biosynthesis of isoprenoids. Catalyzes the 1,3-allylic rearrangement of the homoallylic substrate isopentenyl (IPP) to its allylic isomer, dimethylallyl diphosphate (DMAPP). The protein is Isopentenyl-diphosphate delta-isomerase of Archaeoglobus fulgidus (strain ATCC 49558 / DSM 4304 / JCM 9628 / NBRC 100126 / VC-16).